The following is a 459-amino-acid chain: tRNA modification GTPase MnmE (459 aa).

The (6S)-5-formyl-5,6,7,8-tetrahydrofolate site is built by Arg30, Glu93, and Lys132. A TrmE-type G domain is found at 226–381 (GVTMAIVGKP…LEEKILESVK (156 aa)). K(+) is bound at residue Asn236. Residues 236–241 (NVGKST), 255–261 (TDIPGTT), and 280–283 (DTAG) each bind GTP. Position 240 (Ser240) interacts with Mg(2+). Positions 255, 257, and 260 each coordinate K(+). Mg(2+) is bound at residue Thr261. Lys459 is a (6S)-5-formyl-5,6,7,8-tetrahydrofolate binding site.

This sequence belongs to the TRAFAC class TrmE-Era-EngA-EngB-Septin-like GTPase superfamily. TrmE GTPase family. As to quaternary structure, homodimer. Heterotetramer of two MnmE and two MnmG subunits. The cofactor is K(+).

The protein localises to the cytoplasm. Exhibits a very high intrinsic GTPase hydrolysis rate. Involved in the addition of a carboxymethylaminomethyl (cmnm) group at the wobble position (U34) of certain tRNAs, forming tRNA-cmnm(5)s(2)U34. The polypeptide is tRNA modification GTPase MnmE (Fervidobacterium nodosum (strain ATCC 35602 / DSM 5306 / Rt17-B1)).